The primary structure comprises 346 residues: Phosphate acyltransferase (346 aa).

This sequence belongs to the PlsX family. Homodimer. Probably interacts with PlsY.

It is found in the cytoplasm. It carries out the reaction a fatty acyl-[ACP] + phosphate = an acyl phosphate + holo-[ACP]. Its pathway is lipid metabolism; phospholipid metabolism. Catalyzes the reversible formation of acyl-phosphate (acyl-PO(4)) from acyl-[acyl-carrier-protein] (acyl-ACP). This enzyme utilizes acyl-ACP as fatty acyl donor, but not acyl-CoA. In Deinococcus geothermalis (strain DSM 11300 / CIP 105573 / AG-3a), this protein is Phosphate acyltransferase.